Reading from the N-terminus, the 219-residue chain is Thiopurine S-methyltransferase (219 aa).

S-adenosyl-L-methionine-binding residues include W10, L45, E66, and R123.

Belongs to the class I-like SAM-binding methyltransferase superfamily. TPMT family.

It is found in the cytoplasm. The enzyme catalyses S-adenosyl-L-methionine + a thiopurine = S-adenosyl-L-homocysteine + a thiopurine S-methylether.. The chain is Thiopurine S-methyltransferase from Bordetella bronchiseptica (strain ATCC BAA-588 / NCTC 13252 / RB50) (Alcaligenes bronchisepticus).